A 318-amino-acid chain; its full sequence is Na(+)-translocating ferredoxin:NAD(+) oxidoreductase complex subunit D (318 aa).

3 helical membrane passes run 35–55 (LAVA…ICVI), 77–99 (WSAV…WWIG), and 114–134 (FGGL…FLLA). Thr-156 is subject to FMN phosphoryl threonine. 3 consecutive transmembrane segments (helical) span residues 182–202 (VYGC…LYLI), 206–226 (IISW…ALLV), and 261–281 (IIYA…GGYP).

Belongs to the NqrB/RnfD family. In terms of assembly, the complex is composed of six subunits: RnfA, RnfB, RnfC, RnfD, RnfE and RnfG. It depends on FMN as a cofactor.

The protein localises to the cell membrane. It carries out the reaction 2 reduced [2Fe-2S]-[ferredoxin] + Na(+)(in) + NAD(+) + H(+) = 2 oxidized [2Fe-2S]-[ferredoxin] + Na(+)(out) + NADH. In terms of biological role, part of a membrane-bound complex that couples electron transfer with translocation of ions across the membrane. Couples electron transfer from reduced ferredoxin to NAD(+) with electrogenic movement of Na(+) out of the cell. Involved in caffeate respiration. This Acetobacterium woodii (strain ATCC 29683 / DSM 1030 / JCM 2381 / KCTC 1655 / WB1) protein is Na(+)-translocating ferredoxin:NAD(+) oxidoreductase complex subunit D.